The chain runs to 283 residues: Pantothenate synthetase (283 aa).

30 to 37 (MGYLHDGH) contacts ATP. The Proton donor role is filled by H37. Q61 serves as a coordination point for (R)-pantoate. Q61 contributes to the beta-alanine binding site. Residue 148–151 (GQKD) coordinates ATP. Q154 provides a ligand contact to (R)-pantoate. 185–188 (MSSR) provides a ligand contact to ATP.

The protein belongs to the pantothenate synthetase family. Homodimer.

It is found in the cytoplasm. The catalysed reaction is (R)-pantoate + beta-alanine + ATP = (R)-pantothenate + AMP + diphosphate + H(+). Its pathway is cofactor biosynthesis; (R)-pantothenate biosynthesis; (R)-pantothenate from (R)-pantoate and beta-alanine: step 1/1. Catalyzes the condensation of pantoate with beta-alanine in an ATP-dependent reaction via a pantoyl-adenylate intermediate. The sequence is that of Pantothenate synthetase from Carboxydothermus hydrogenoformans (strain ATCC BAA-161 / DSM 6008 / Z-2901).